Reading from the N-terminus, the 259-residue chain is Protein LEAD-SENSITIVE 1 (259 aa).

The LRAT domain occupies 20–168 (YSWRTAYIYA…CKTALLVLEG (149 aa)). Active-site residues include His-30 and His-42. Residue Cys-152 is the Acyl-thioester intermediate of the active site.

In terms of tissue distribution, highly expressed in inflorescences, siliques and stems, and, to a lower extent, in roots and leaves.

It localises to the cytoplasm. Confers tolerance to lead ions (Pb) stress mediated by Pb(NO(3))(2) probably by promoting Pb accumulation leading to subsequent glutathione-dependent phytochelatin (PC) synthesis and related gene expression, including PDR12/ABCG40, GSH1, GSH2, GR1, GR2, PCS1 and PCS2. The protein is Protein LEAD-SENSITIVE 1 of Arabidopsis thaliana (Mouse-ear cress).